Here is a 499-residue protein sequence, read N- to C-terminus: Glutamate--tRNA ligase (499 aa).

A 'HIGH' region motif is present at residues 10 to 20 (PSPTGTPHVGM). Positions 255–259 (KLSKR) match the 'KMSKS' region motif. An ATP-binding site is contributed by Lys258.

The protein belongs to the class-I aminoacyl-tRNA synthetase family. Glutamate--tRNA ligase type 1 subfamily. As to quaternary structure, monomer.

It localises to the cytoplasm. The catalysed reaction is tRNA(Glu) + L-glutamate + ATP = L-glutamyl-tRNA(Glu) + AMP + diphosphate. In terms of biological role, catalyzes the attachment of glutamate to tRNA(Glu) in a two-step reaction: glutamate is first activated by ATP to form Glu-AMP and then transferred to the acceptor end of tRNA(Glu). The sequence is that of Glutamate--tRNA ligase from Corynebacterium urealyticum (strain ATCC 43042 / DSM 7109).